The following is a 256-amino-acid chain: Thiazole synthase (256 aa).

K95 functions as the Schiff-base intermediate with DXP in the catalytic mechanism. 1-deoxy-D-xylulose 5-phosphate contacts are provided by residues G156, 182-183, and 204-205; these read AG and NT.

Belongs to the ThiG family. Homotetramer. Forms heterodimers with either ThiH or ThiS.

The protein localises to the cytoplasm. It carries out the reaction [ThiS sulfur-carrier protein]-C-terminal-Gly-aminoethanethioate + 2-iminoacetate + 1-deoxy-D-xylulose 5-phosphate = [ThiS sulfur-carrier protein]-C-terminal Gly-Gly + 2-[(2R,5Z)-2-carboxy-4-methylthiazol-5(2H)-ylidene]ethyl phosphate + 2 H2O + H(+). It participates in cofactor biosynthesis; thiamine diphosphate biosynthesis. Catalyzes the rearrangement of 1-deoxy-D-xylulose 5-phosphate (DXP) to produce the thiazole phosphate moiety of thiamine. Sulfur is provided by the thiocarboxylate moiety of the carrier protein ThiS. In vitro, sulfur can be provided by H(2)S. In Salmonella agona (strain SL483), this protein is Thiazole synthase.